A 341-amino-acid chain; its full sequence is Methionine import ATP-binding protein MetN 2 (341 aa).

Residues Ile-2 to Val-241 form the ABC transporter domain. Gly-38–Ser-45 is an ATP binding site.

It belongs to the ABC transporter superfamily. Methionine importer (TC 3.A.1.24) family. The complex is composed of two ATP-binding proteins (MetN), two transmembrane proteins (MetI) and a solute-binding protein (MetQ).

It localises to the cell membrane. It carries out the reaction L-methionine(out) + ATP + H2O = L-methionine(in) + ADP + phosphate + H(+). The enzyme catalyses D-methionine(out) + ATP + H2O = D-methionine(in) + ADP + phosphate + H(+). In terms of biological role, part of the ABC transporter complex MetNIQ involved in methionine import. Responsible for energy coupling to the transport system. The sequence is that of Methionine import ATP-binding protein MetN 2 from Staphylococcus aureus (strain MRSA252).